We begin with the raw amino-acid sequence, 334 residues long: Phosphate acyltransferase (334 aa).

Belongs to the PlsX family. In terms of assembly, homodimer. Probably interacts with PlsY.

The protein localises to the cytoplasm. It catalyses the reaction a fatty acyl-[ACP] + phosphate = an acyl phosphate + holo-[ACP]. Its pathway is lipid metabolism; phospholipid metabolism. In terms of biological role, catalyzes the reversible formation of acyl-phosphate (acyl-PO(4)) from acyl-[acyl-carrier-protein] (acyl-ACP). This enzyme utilizes acyl-ACP as fatty acyl donor, but not acyl-CoA. The sequence is that of Phosphate acyltransferase from Acholeplasma laidlawii (strain PG-8A).